We begin with the raw amino-acid sequence, 452 residues long: Glycine receptor subunit alpha-2 (452 aa).

The N-terminal stretch at 1 to 27 is a signal peptide; sequence MNRQLVNILTALFAFFLGTNHFREAFC. Residues 28 to 256 lie on the Extracellular side of the membrane; it reads KDHDSRSGKH…KFHLERQMGY (229 aa). Asn-72 is a glycosylation site (N-linked (GlcNAc...) asparagine). A glycine-binding site is contributed by Arg-99. A strychnine-binding site is contributed by Arg-99. The N-linked (GlcNAc...) asparagine glycan is linked to Asn-103. Position 163 (Ser-163) interacts with glycine. Cys-172 and Cys-186 are joined by a disulfide. 2 residues coordinate Zn(2+): Glu-226 and Glu-228. Residues Cys-232 and Cys-243 are joined by a disulfide bond. Thr-238 is a glycine binding site. His-249 is a binding site for Zn(2+). The helical transmembrane segment at 257 to 278 threads the bilayer; that stretch reads YLIQMYIPSLLIVILSWVSFWI. Topologically, residues 279–283 are cytoplasmic; it reads NMDAA. A helical membrane pass occupies residues 284–304; sequence PARVALGITTVLTMTTQSSGS. Residues 305–315 lie on the Extracellular side of the membrane; that stretch reads RASLPKVSYVK. Residues 316–336 form a helical membrane-spanning segment; it reads AIDIWMAVCLLFVFAALLEYA. Topologically, residues 337-420 are cytoplasmic; sequence AVNFVSRQHK…FVDRAKRIDT (84 aa). Residues 421 to 441 form a helical membrane-spanning segment; that stretch reads ISRAAFPLAFLIFNIFYWITY. Topologically, residues 442 to 452 are extracellular; that stretch reads KIIRHEDVHKK.

Belongs to the ligand-gated ion channel (TC 1.A.9) family. Glycine receptor (TC 1.A.9.3) subfamily. GLRA2 sub-subfamily. Interacts with GLRB. Heteropentamer composed of GLRA2 and GLRB; functional GLRB-GLRA2 heteropentamers contain four GLRA2 subunits and one GLRB subunit, although alternative subunit composition cannot be excluded. Homopentamer (in vitro). Both homopentamers and heteropentamers form functional ion channels, but their characteristics are subtly different.

The protein localises to the postsynaptic cell membrane. Its subcellular location is the synapse. It localises to the cell membrane. The protein resides in the cell projection. The catalysed reaction is chloride(in) = chloride(out). Its activity is regulated as follows. Channel opening is triggered by extracellular glycine. Channel opening is also triggered by taurine and beta-alanine. Inhibited by strychnine. Inhibited by picrotoxin. Its function is as follows. Subunit of heteromeric glycine-gated chloride channels. Plays a role in synaptic plasticity. Contributes to the generation of inhibitory postsynaptic currents, and is involved in the down-regulation of neuronal excitability. Plays a role in cellular responses to ethanol. The chain is Glycine receptor subunit alpha-2 from Rattus norvegicus (Rat).